We begin with the raw amino-acid sequence, 200 residues long: LHFPL tetraspan subfamily member 6 protein (200 aa).

The N-terminal stretch at 1–21 is a signal peptide; it reads MASSLTCAGVIWALLSFLCAA. The next 2 membrane-spanning stretches (helical) occupy residues 84–104 and 123–143; these read ICTV…LTAI and GIQF…PLGW. A glycan (N-linked (GlcNAc...) asparagine) is linked at Asn-154. The helical transmembrane segment at 172 to 192 threads the bilayer; that stretch reads CTGAGAAAAMVLCTWMACFAG.

The protein belongs to the LHFP family.

The protein resides in the membrane. In Danio rerio (Zebrafish), this protein is LHFPL tetraspan subfamily member 6 protein.